We begin with the raw amino-acid sequence, 184 residues long: Protein GrpE (184 aa).

The segment covering 1–17 (MQHEDKTPEQQENKTPE) has biased composition (basic and acidic residues). The tract at residues 1–39 (MQHEDKTPEQQENKTPETELQQENAPATPQEAGAAGSID) is disordered. The segment covering 18–27 (TELQQENAPA) has biased composition (polar residues).

This sequence belongs to the GrpE family. Homodimer.

It localises to the cytoplasm. Participates actively in the response to hyperosmotic and heat shock by preventing the aggregation of stress-denatured proteins, in association with DnaK and GrpE. It is the nucleotide exchange factor for DnaK and may function as a thermosensor. Unfolded proteins bind initially to DnaJ; upon interaction with the DnaJ-bound protein, DnaK hydrolyzes its bound ATP, resulting in the formation of a stable complex. GrpE releases ADP from DnaK; ATP binding to DnaK triggers the release of the substrate protein, thus completing the reaction cycle. Several rounds of ATP-dependent interactions between DnaJ, DnaK and GrpE are required for fully efficient folding. In Methylobacillus flagellatus (strain ATCC 51484 / DSM 6875 / VKM B-1610 / KT), this protein is Protein GrpE.